Reading from the N-terminus, the 188-residue chain is UPF0301 protein XC_1365 (188 aa).

This sequence belongs to the UPF0301 (AlgH) family.

This chain is UPF0301 protein XC_1365, found in Xanthomonas campestris pv. campestris (strain 8004).